A 227-amino-acid polypeptide reads, in one-letter code: Ribosomal RNA small subunit methyltransferase G (227 aa).

S-adenosyl-L-methionine contacts are provided by residues Gly74, Leu79, 124–125, and Arg142; that span reads AE.

The protein belongs to the methyltransferase superfamily. RNA methyltransferase RsmG family.

The protein localises to the cytoplasm. In terms of biological role, specifically methylates the N7 position of guanine in position 518 of 16S rRNA. This chain is Ribosomal RNA small subunit methyltransferase G, found in Mycolicibacterium vanbaalenii (strain DSM 7251 / JCM 13017 / BCRC 16820 / KCTC 9966 / NRRL B-24157 / PYR-1) (Mycobacterium vanbaalenii).